A 342-amino-acid chain; its full sequence is Putative TPR repeat-containing protein R856 (342 aa).

TPR repeat units lie at residues 36-69 (VHIFNKAAIVFHRNGQHKKSLEMYEKAFGNIFNG), 77-110 (FYSVNGMASMYQALGDYDIAIKKYNSVIKIIKDM), 119-152 (VYALMGIASISQIKGNYDEALSKYNEALEINEKL), 161-194 (AFVLNRLGMLYHELDDNDKSIDHFNESLKIYREK), 203-236 (AFTISRLAQSLLKMGNDSEALEKYQESIDIFNKI), 245-278 (AFSLYGIGTVYEFRSEYSKALEKYQESLQTYKNV), and 291-324 (ASCLYKIGLVYKLSGNDNESTTYLNQANQMFEST).

The polypeptide is Putative TPR repeat-containing protein R856 (Acanthamoeba polyphaga mimivirus (APMV)).